The primary structure comprises 73 residues: UPF0435 protein OB1527 (73 aa).

It belongs to the UPF0435 family.

In Oceanobacillus iheyensis (strain DSM 14371 / CIP 107618 / JCM 11309 / KCTC 3954 / HTE831), this protein is UPF0435 protein OB1527.